The sequence spans 178 residues: Crossover junction endodeoxyribonuclease RuvC (178 aa).

Active-site residues include D18, E78, and D150. Residues D18, E78, and D150 each contribute to the Mg(2+) site.

This sequence belongs to the RuvC family. In terms of assembly, homodimer which binds Holliday junction (HJ) DNA. The HJ becomes 2-fold symmetrical on binding to RuvC with unstacked arms; it has a different conformation from HJ DNA in complex with RuvA. In the full resolvosome a probable DNA-RuvA(4)-RuvB(12)-RuvC(2) complex forms which resolves the HJ. Requires Mg(2+) as cofactor.

The protein localises to the cytoplasm. The catalysed reaction is Endonucleolytic cleavage at a junction such as a reciprocal single-stranded crossover between two homologous DNA duplexes (Holliday junction).. In terms of biological role, the RuvA-RuvB-RuvC complex processes Holliday junction (HJ) DNA during genetic recombination and DNA repair. Endonuclease that resolves HJ intermediates. Cleaves cruciform DNA by making single-stranded nicks across the HJ at symmetrical positions within the homologous arms, yielding a 5'-phosphate and a 3'-hydroxyl group; requires a central core of homology in the junction. The consensus cleavage sequence is 5'-(A/T)TT(C/G)-3'. Cleavage occurs on the 3'-side of the TT dinucleotide at the point of strand exchange. HJ branch migration catalyzed by RuvA-RuvB allows RuvC to scan DNA until it finds its consensus sequence, where it cleaves and resolves the cruciform DNA. The protein is Crossover junction endodeoxyribonuclease RuvC of Granulibacter bethesdensis (strain ATCC BAA-1260 / CGDNIH1).